The primary structure comprises 195 residues: Peptidyl-tRNA hydrolase (195 aa).

Tyr17 contacts tRNA. His22 acts as the Proton acceptor in catalysis. Positions 68, 70, and 116 each coordinate tRNA.

It belongs to the PTH family. As to quaternary structure, monomer.

It localises to the cytoplasm. The enzyme catalyses an N-acyl-L-alpha-aminoacyl-tRNA + H2O = an N-acyl-L-amino acid + a tRNA + H(+). In terms of biological role, hydrolyzes ribosome-free peptidyl-tRNAs (with 1 or more amino acids incorporated), which drop off the ribosome during protein synthesis, or as a result of ribosome stalling. Catalyzes the release of premature peptidyl moieties from peptidyl-tRNA molecules trapped in stalled 50S ribosomal subunits, and thus maintains levels of free tRNAs and 50S ribosomes. The sequence is that of Peptidyl-tRNA hydrolase from Shewanella oneidensis (strain ATCC 700550 / JCM 31522 / CIP 106686 / LMG 19005 / NCIMB 14063 / MR-1).